A 361-amino-acid chain; its full sequence is Polygalacturonase (361 aa).

A signal peptide spans 1–18 (MISANSLLISTLCAFAIA). A disulfide bridge connects residues cysteine 27 and cysteine 43. PbH1 repeat units follow at residues 155 to 185 (CSDL…DVGS), 186 to 207 (SSNV…AVNS), 208 to 228 (GSTI…SVGS), 237 to 258 (VNGF…RIKT), and 266 to 288 (VTNV…VIEG). Aspartate 200 functions as the Proton donor in the catalytic mechanism. Cysteines 202 and 218 form a disulfide. Histidine 222 is an active-site residue. N-linked (GlcNAc...) asparagine glycosylation is found at asparagine 318 and asparagine 330. Cysteines 350 and 361 form a disulfide.

It belongs to the glycosyl hydrolase 28 family.

It carries out the reaction (1,4-alpha-D-galacturonosyl)n+m + H2O = (1,4-alpha-D-galacturonosyl)n + (1,4-alpha-D-galacturonosyl)m.. This chain is Polygalacturonase (PGU1), found in Saccharomyces cerevisiae (strain ATCC 204508 / S288c) (Baker's yeast).